Consider the following 424-residue polypeptide: UPF0761 membrane protein Smlt0865 (424 aa).

6 helical membrane-spanning segments follow: residues 48–68 (VFALVPLAIVVFGVLSAFPVF), 101–121 (SAGQLTAAGFIALVVSLLITL), 144–164 (FLVYWTVLTLGAMLAAASLAV), 181–201 (WLAELALRLAPILIEFVCITL), 216–236 (AVPGAILAAVILELVKWGIGA), and 251–271 (VAFVPILLLWIYLCWVAVLLG).

Belongs to the UPF0761 family.

Its subcellular location is the cell inner membrane. This chain is UPF0761 membrane protein Smlt0865, found in Stenotrophomonas maltophilia (strain K279a).